The primary structure comprises 550 residues: Methionine--tRNA ligase (550 aa).

The 'HIGH' region signature appears at Pro-12 to His-22. Zn(2+) contacts are provided by Cys-144, Cys-147, Cys-157, and Cys-160. Residues Gln-330–Ser-334 carry the 'KMSKS' region motif. Lys-333 is a binding site for ATP.

This sequence belongs to the class-I aminoacyl-tRNA synthetase family. MetG type 1 subfamily. Monomer. Requires Zn(2+) as cofactor.

The protein localises to the cytoplasm. The enzyme catalyses tRNA(Met) + L-methionine + ATP = L-methionyl-tRNA(Met) + AMP + diphosphate. In terms of biological role, is required not only for elongation of protein synthesis but also for the initiation of all mRNA translation through initiator tRNA(fMet) aminoacylation. The sequence is that of Methionine--tRNA ligase from Chlamydia caviae (strain ATCC VR-813 / DSM 19441 / 03DC25 / GPIC) (Chlamydophila caviae).